The chain runs to 159 residues: Protein-export protein SecB (159 aa).

It belongs to the SecB family. In terms of assembly, homotetramer, a dimer of dimers. One homotetramer interacts with 1 SecA dimer.

It is found in the cytoplasm. Functionally, one of the proteins required for the normal export of preproteins out of the cell cytoplasm. It is a molecular chaperone that binds to a subset of precursor proteins, maintaining them in a translocation-competent state. It also specifically binds to its receptor SecA. This is Protein-export protein SecB from Nitrosospira multiformis (strain ATCC 25196 / NCIMB 11849 / C 71).